Consider the following 1035-residue polypeptide: Unconventional myosin IC (1035 aa).

Positions 21–703 (GVQDFVLLEN…TLFDTEDAYQ (683 aa)) constitute a Myosin motor domain. 114 to 121 (GESGSGKT) is a binding site for ATP. The residue at position 304 (S304) is a Phosphoserine. Phosphothreonine is present on T310. Residues 578–600 (LNNLMDILMCKEPSYIRCIKPND) are actin-binding. IQ domains lie at 696 to 728 (FDTE…KYLK), 729 to 751 (LRAQ…AAKK), and 752 to 779 (RREA…FNEE). The region spanning 857 to 1035 (KNNYASSVST…KGHLVIIGTQ (179 aa)) is the TH1 domain.

It belongs to the TRAFAC class myosin-kinesin ATPase superfamily. Myosin family. In terms of assembly, binds F-actin. In terms of tissue distribution, in the embryo, expressed in gastric caeca, midgut cells of the proventriculus, and in the mid and hindgut. In the larval and adult gut brush border, expressed in the microvilli. Also expressed at high levels in follicle cells during oogenesis.

It localises to the cytoplasm. The protein localises to the cell cortex. Its subcellular location is the cell membrane. Its function is as follows. Unconventional myosin that functions as actin-based motor protein with ATPase activity. Binds to membranes enriched in phosphatidylinositol 4-5-bisphosphate, and can glide along actin filaments when anchored to a lipid bilayer. Functions as antagonist for Myo31DF, an unconventional myosin with an essential role in the establishment of body left-right asymmetry. The sequence is that of Unconventional myosin IC (Myo61F) from Drosophila melanogaster (Fruit fly).